An 817-amino-acid polypeptide reads, in one-letter code: Lon protease (817 aa).

A Lon N-terminal domain is found at 22 to 216 (VPIMPLSDGV…KVTRQLNHQL (195 aa)). An ATP-binding site is contributed by 368–375 (GPPGTGKT). A Lon proteolytic domain is found at 604–785 (ALTPGVVMGL…GDVLELALNG (182 aa)). Catalysis depends on residues serine 691 and lysine 734. The interval 784–817 (NGNGATKKKKKTPAKSKKSTKPAAKKTAARKSRK) is disordered. Positions 789 to 817 (TKKKKKTPAKSKKSTKPAAKKTAARKSRK) are enriched in basic residues.

The protein belongs to the peptidase S16 family. As to quaternary structure, homohexamer. Organized in a ring with a central cavity.

It is found in the cytoplasm. The catalysed reaction is Hydrolysis of proteins in presence of ATP.. In terms of biological role, ATP-dependent serine protease that mediates the selective degradation of mutant and abnormal proteins as well as certain short-lived regulatory proteins. Required for cellular homeostasis and for survival from DNA damage and developmental changes induced by stress. Degrades polypeptides processively to yield small peptide fragments that are 5 to 10 amino acids long. Binds to DNA in a double-stranded, site-specific manner. In Desulfosudis oleivorans (strain DSM 6200 / JCM 39069 / Hxd3) (Desulfococcus oleovorans), this protein is Lon protease.